Reading from the N-terminus, the 339-residue chain is Ketol-acid reductoisomerase (NADP(+)) (339 aa).

The region spanning 1–182 (MRVYYDRDAD…GGGRSGIIET (182 aa)) is the KARI N-terminal Rossmann domain. Residues 24-27 (YGSQ), Arg48, Ser51, Ser53, and 83-86 (DELQ) each bind NADP(+). His108 is an active-site residue. Gly134 is an NADP(+) binding site. One can recognise a KARI C-terminal knotted domain in the interval 183-328 (TFREECETDL…EKLRGMMPWI (146 aa)). Positions 191, 195, 227, and 231 each coordinate Mg(2+). Residue Ser252 participates in substrate binding.

Belongs to the ketol-acid reductoisomerase family. Mg(2+) is required as a cofactor.

It carries out the reaction (2R)-2,3-dihydroxy-3-methylbutanoate + NADP(+) = (2S)-2-acetolactate + NADPH + H(+). The enzyme catalyses (2R,3R)-2,3-dihydroxy-3-methylpentanoate + NADP(+) = (S)-2-ethyl-2-hydroxy-3-oxobutanoate + NADPH + H(+). Its pathway is amino-acid biosynthesis; L-isoleucine biosynthesis; L-isoleucine from 2-oxobutanoate: step 2/4. It functions in the pathway amino-acid biosynthesis; L-valine biosynthesis; L-valine from pyruvate: step 2/4. Its function is as follows. Involved in the biosynthesis of branched-chain amino acids (BCAA). Catalyzes an alkyl-migration followed by a ketol-acid reduction of (S)-2-acetolactate (S2AL) to yield (R)-2,3-dihydroxy-isovalerate. In the isomerase reaction, S2AL is rearranged via a Mg-dependent methyl migration to produce 3-hydroxy-3-methyl-2-ketobutyrate (HMKB). In the reductase reaction, this 2-ketoacid undergoes a metal-dependent reduction by NADPH to yield (R)-2,3-dihydroxy-isovalerate. The chain is Ketol-acid reductoisomerase (NADP(+)) from Magnetospirillum molischianum (Rhodospirillum molischianum).